A 184-amino-acid polypeptide reads, in one-letter code: Peptidoglycan-recognition protein SC2 (184 aa).

A signal peptide spans 1 to 20; sequence MANKALILLAVLFCAQAVLG. The region spanning 45–169 is the N-acetylmuramoyl-L-alanine amidase domain; it reads SYAVIHHTAG…RQVGSTECPG (125 aa). Histidine 50 serves as a coordination point for Zn(2+). The cysteines at positions 57 and 63 are disulfide-linked. Positions 159 and 167 each coordinate Zn(2+).

This sequence belongs to the N-acetylmuramoyl-L-alanine amidase 2 family. Zn(2+) is required as a cofactor.

Its subcellular location is the secreted. The catalysed reaction is Hydrolyzes the link between N-acetylmuramoyl residues and L-amino acid residues in certain cell-wall glycopeptides.. Functionally, N-acetylmuramyl-L-alanine amidase involved in innate immunity by degrading bacterial peptidoglycans (PGN). Probably plays a scavenger role by digesting biologically active PGN into biologically inactive fragments. Has no direct bacteriolytic activity. In Drosophila simulans (Fruit fly), this protein is Peptidoglycan-recognition protein SC2 (PGRP-SC2).